We begin with the raw amino-acid sequence, 59 residues long: Putative potassium channel toxin Ts25 (59 aa).

A signal peptide spans 1–22; the sequence is MKAFYGILIIFILISMIHLSQQ. Cystine bridges form between cysteine 29/cysteine 50, cysteine 35/cysteine 55, and cysteine 39/cysteine 57.

The protein belongs to the short scorpion toxin superfamily. Potassium channel inhibitor family. Alpha-KTx 04 subfamily. In terms of tissue distribution, expressed by the venom gland.

The protein localises to the secreted. In terms of biological role, potently blocks Kv1.1/KCNA1 (85%), Kv1.2/KCNA2 (91%), Kv1.3/KCNA3 (89%), Kv1.6/KCNA6 (94%), and Shaker (97%). In Tityus serrulatus (Brazilian scorpion), this protein is Putative potassium channel toxin Ts25.